The following is a 460-amino-acid chain: Bifunctional protein GlmU (460 aa).

Residues 1–229 are pyrophosphorylase; sequence MTNYAIILAA…FNESLGVNDR (229 aa). Residues 8-11, lysine 22, glutamine 72, and 77-78 each bind UDP-N-acetyl-alpha-D-glucosamine; these read LAAG and GT. Aspartate 102 provides a ligand contact to Mg(2+). UDP-N-acetyl-alpha-D-glucosamine-binding residues include glycine 139, glutamate 154, asparagine 169, and asparagine 227. Asparagine 227 serves as a coordination point for Mg(2+). Positions 230–250 are linker; that stretch reads VALATAETVMRQRITQKHMVN. Residues 251-460 are N-acetyltransferase; it reads GVTFQNPETV…RLAHHPSRSK (210 aa). The UDP-N-acetyl-alpha-D-glucosamine site is built by arginine 332 and lysine 350. Histidine 362 acts as the Proton acceptor in catalysis. Tyrosine 365 and asparagine 376 together coordinate UDP-N-acetyl-alpha-D-glucosamine. Acetyl-CoA is bound by residues alanine 379, 385–386, serine 404, alanine 422, and arginine 439; that span reads NY.

It in the N-terminal section; belongs to the N-acetylglucosamine-1-phosphate uridyltransferase family. In the C-terminal section; belongs to the transferase hexapeptide repeat family. Homotrimer. It depends on Mg(2+) as a cofactor.

The protein localises to the cytoplasm. The catalysed reaction is alpha-D-glucosamine 1-phosphate + acetyl-CoA = N-acetyl-alpha-D-glucosamine 1-phosphate + CoA + H(+). It catalyses the reaction N-acetyl-alpha-D-glucosamine 1-phosphate + UTP + H(+) = UDP-N-acetyl-alpha-D-glucosamine + diphosphate. It participates in nucleotide-sugar biosynthesis; UDP-N-acetyl-alpha-D-glucosamine biosynthesis; N-acetyl-alpha-D-glucosamine 1-phosphate from alpha-D-glucosamine 6-phosphate (route II): step 2/2. Its pathway is nucleotide-sugar biosynthesis; UDP-N-acetyl-alpha-D-glucosamine biosynthesis; UDP-N-acetyl-alpha-D-glucosamine from N-acetyl-alpha-D-glucosamine 1-phosphate: step 1/1. The protein operates within bacterial outer membrane biogenesis; LPS lipid A biosynthesis. Functionally, catalyzes the last two sequential reactions in the de novo biosynthetic pathway for UDP-N-acetylglucosamine (UDP-GlcNAc). The C-terminal domain catalyzes the transfer of acetyl group from acetyl coenzyme A to glucosamine-1-phosphate (GlcN-1-P) to produce N-acetylglucosamine-1-phosphate (GlcNAc-1-P), which is converted into UDP-GlcNAc by the transfer of uridine 5-monophosphate (from uridine 5-triphosphate), a reaction catalyzed by the N-terminal domain. This Streptococcus pyogenes serotype M12 (strain MGAS9429) protein is Bifunctional protein GlmU.